The following is a 107-amino-acid chain: Nucleoid-associated protein Mlg_1509 (107 aa).

The protein belongs to the YbaB/EbfC family. Homodimer.

The protein resides in the cytoplasm. Its subcellular location is the nucleoid. In terms of biological role, binds to DNA and alters its conformation. May be involved in regulation of gene expression, nucleoid organization and DNA protection. The chain is Nucleoid-associated protein Mlg_1509 from Alkalilimnicola ehrlichii (strain ATCC BAA-1101 / DSM 17681 / MLHE-1).